The sequence spans 176 residues: Cytochrome b (176 aa).

The next 3 membrane-spanning stretches (helical) occupy residues 33-53 (FGSL…FLAM), 77-98 (WVLR…YLHV), and 113-133 (WNMG…GYVL). Heme b-binding residues include histidine 83 and histidine 97.

Belongs to the cytochrome b family. As to quaternary structure, the cytochrome bc1 complex contains 11 subunits: 3 respiratory subunits (MT-CYB, CYC1 and UQCRFS1), 2 core proteins (UQCRC1 and UQCRC2) and 6 low-molecular weight proteins (UQCRH/QCR6, UQCRB/QCR7, UQCRQ/QCR8, UQCR10/QCR9, UQCR11/QCR10 and a cleavage product of UQCRFS1). This cytochrome bc1 complex then forms a dimer. Heme b serves as cofactor.

The protein resides in the mitochondrion inner membrane. Component of the ubiquinol-cytochrome c reductase complex (complex III or cytochrome b-c1 complex) that is part of the mitochondrial respiratory chain. The b-c1 complex mediates electron transfer from ubiquinol to cytochrome c. Contributes to the generation of a proton gradient across the mitochondrial membrane that is then used for ATP synthesis. In Nycticeius humeralis (Evening bat), this protein is Cytochrome b (MT-CYB).